We begin with the raw amino-acid sequence, 205 residues long: Lymphotoxin-alpha (205 aa).

Residues 1–34 (MTPPERLFLPRVRGTTLHLLLLGLLLVLLPGAQG) form the signal peptide. O-linked (GalNAc...) threonine glycosylation is present at T41. Residues 63–205 (PAAHLIGDPS…STVFFGAFAL (143 aa)) form the THD domain. N-linked (GlcNAc...) asparagine glycosylation occurs at N96.

Belongs to the tumor necrosis factor family. Homotrimer, and heterotrimer of either two LTB and one LTA subunits or (less prevalent) two LTA and one LTB subunits. Interacts with TNFRSF14.

The protein resides in the secreted. The protein localises to the membrane. Its function is as follows. Cytokine that in its homotrimeric form binds to TNFRSF1A/TNFR1, TNFRSF1B/TNFBR and TNFRSF14/HVEM. In its heterotrimeric form with LTB binds to TNFRSF3/LTBR. Lymphotoxin is produced by lymphocytes and is cytotoxic for a wide range of tumor cells in vitro and in vivo. This chain is Lymphotoxin-alpha (LTA), found in Pan troglodytes (Chimpanzee).